The primary structure comprises 315 residues: Ribosomal RNA small subunit methyltransferase H (315 aa).

Residues Gly37–His39, Asp57, Phe83, Asp105, and Gln112 contribute to the S-adenosyl-L-methionine site.

This sequence belongs to the methyltransferase superfamily. RsmH family.

The protein resides in the cytoplasm. It catalyses the reaction cytidine(1402) in 16S rRNA + S-adenosyl-L-methionine = N(4)-methylcytidine(1402) in 16S rRNA + S-adenosyl-L-homocysteine + H(+). Its function is as follows. Specifically methylates the N4 position of cytidine in position 1402 (C1402) of 16S rRNA. The chain is Ribosomal RNA small subunit methyltransferase H from Pseudomonas fluorescens (strain ATCC BAA-477 / NRRL B-23932 / Pf-5).